The primary structure comprises 314 residues: Protein EXORDIUM (314 aa).

An N-terminal signal peptide occupies residues 1 to 21; that stretch reads MYLLVFKLFLFLSLLQISVSA.

This sequence belongs to the EXORDIUM family. As to expression, expressed in root tips, vascular tissue of roots, shoot apex, rosette leaves and embryos.

Its subcellular location is the secreted. The protein resides in the extracellular space. It localises to the apoplast. Its function is as follows. Required for cell expansion in leaves. May mediate brassinosteroid (BR)-induced leaf growth. May play a role in the control of BR responses in roots. May be involved in signaling processes that coordinate BR responses with environmental or developmental signals. In Arabidopsis thaliana (Mouse-ear cress), this protein is Protein EXORDIUM (EXO).